We begin with the raw amino-acid sequence, 642 residues long: Threonine--tRNA ligase (642 aa).

The region spanning 1–61 (MPVITLPDGS…DTDSELSIIT (61 aa)) is the TGS domain. Residues 243–534 (DHRKIGKQLD…LIEEYAGKFP (292 aa)) are catalytic. Zn(2+) contacts are provided by Cys334, His385, and His511.

This sequence belongs to the class-II aminoacyl-tRNA synthetase family. In terms of assembly, homodimer. Zn(2+) is required as a cofactor.

Its subcellular location is the cytoplasm. It carries out the reaction tRNA(Thr) + L-threonine + ATP = L-threonyl-tRNA(Thr) + AMP + diphosphate + H(+). Functionally, catalyzes the attachment of threonine to tRNA(Thr) in a two-step reaction: L-threonine is first activated by ATP to form Thr-AMP and then transferred to the acceptor end of tRNA(Thr). Also edits incorrectly charged L-seryl-tRNA(Thr). The chain is Threonine--tRNA ligase from Shewanella piezotolerans (strain WP3 / JCM 13877).